The chain runs to 78 residues: MKKQNLIEMEGIVTESLPNAMFRVSLDNGCQVLAHISGKIRRNYIRILPGDKVKVELSPYDLTKGRITYRLRMKTTNG.

The 72-residue stretch at 1 to 72 folds into the S1-like domain; the sequence is MKKQNLIEME…TKGRITYRLR (72 aa).

Belongs to the IF-1 family. In terms of assembly, component of the 30S ribosomal translation pre-initiation complex which assembles on the 30S ribosome in the order IF-2 and IF-3, IF-1 and N-formylmethionyl-tRNA(fMet); mRNA recruitment can occur at any time during PIC assembly.

It is found in the plastid. It localises to the chloroplast. Its function is as follows. One of the essential components for the initiation of protein synthesis. Stabilizes the binding of IF-2 and IF-3 on the 30S subunit to which N-formylmethionyl-tRNA(fMet) subsequently binds. Helps modulate mRNA selection, yielding the 30S pre-initiation complex (PIC). Upon addition of the 50S ribosomal subunit IF-1, IF-2 and IF-3 are released leaving the mature 70S translation initiation complex. The polypeptide is Translation initiation factor IF-1, chloroplastic (Chaetosphaeridium globosum (Charophycean green alga)).